Reading from the N-terminus, the 192-residue chain is Iodate reductase subunit IdrB (192 aa).

A signal peptide (tat-type signal) is located at residues 1-52 (MSENIIPVRAVPAHDHEHDGERACMSRRRFLLFGGTSVALLSIASLPGVAQV). Positions 102–173 (GADKDIVAFN…LEVQGDDIYA (72 aa)) constitute a Rieske domain. [2Fe-2S] cluster-binding residues include Cys114, His116, Cys135, and His138.

The protein belongs to the AOX family. As to quaternary structure, the iodate reductase (Idr) complex is composed of a molybdopterin-dependent iodate reductase (IdrA and IdrB subunits) and two associated peroxidases (IdrP1 and IdrP2). [2Fe-2S] cluster is required as a cofactor. In terms of processing, predicted to be exported by the Tat system. The position of the signal peptide cleavage has not been experimentally proven.

The protein resides in the periplasm. Involved in iodate respiration. Probably catalyzes the reduction of iodate (IO(3)(-)) to hypoiodous acid (HIO) and H(2)O(2), using a reduced cytochrome c as the electron donor. This is Iodate reductase subunit IdrB from Pseudomonas sp. (strain SCT).